The chain runs to 752 residues: Translation initiation factor IF-2 (752 aa).

The tract at residues 26 to 167 (RQGMGVKSHM…QPTQRKDKPL (142 aa)) is disordered. The segment covering 34–47 (HMSSVTPDQAQQLR) has biased composition (polar residues). Residues 72 to 81 (KQNNHQAQNH) are compositionally biased toward low complexity. Over residues 83–96 (QHHDHDKTQNERPQ) the composition is skewed to basic and acidic residues. The span at 101 to 129 (SRSNNGTKDNNQHQNNGGRFGGSLNNDQG) shows a compositional bias: polar residues. Basic residues predominate over residues 131–150 (NGKRFNKKNKKNKKHNKNKR). Positions 151-167 (LREVAHKQPTQRKDKPL) are enriched in basic and acidic residues. In terms of domain architecture, tr-type G spans 253 to 422 (TRPAVVTVMG…LLQAEMLELK (170 aa)). Positions 262–269 (GHVDHGKT) are G1. 262 to 269 (GHVDHGKT) is a binding site for GTP. The tract at residues 287–291 (GITQE) is G2. Positions 308-311 (DTPG) are G3. GTP-binding positions include 308-312 (DTPGH) and 362-365 (NKID). The G4 stretch occupies residues 362–365 (NKID). The interval 398–400 (SAK) is G5.

This sequence belongs to the TRAFAC class translation factor GTPase superfamily. Classic translation factor GTPase family. IF-2 subfamily.

The protein localises to the cytoplasm. Its function is as follows. One of the essential components for the initiation of protein synthesis. Protects formylmethionyl-tRNA from spontaneous hydrolysis and promotes its binding to the 30S ribosomal subunits. Also involved in the hydrolysis of GTP during the formation of the 70S ribosomal complex. The polypeptide is Translation initiation factor IF-2 (Limosilactobacillus reuteri (strain DSM 20016) (Lactobacillus reuteri)).